A 326-amino-acid polypeptide reads, in one-letter code: Zinc finger CCCH domain-containing protein 15 (326 aa).

The span at 1–14 (MADGGGGGEAGSGG) shows a compositional bias: gly residues. The tract at residues 1–142 (MADGGGGGEA…SSSGSGSGEV (142 aa)) is disordered. Positions 24–33 (KPPKNIRKRP) are enriched in basic residues. Over residues 47-64 (SGAIAAARAKKAPSSTSK) the composition is skewed to low complexity. Residues 81–100 (YESSRTIQASTDSRATATLE) show a composition bias toward polar residues. The segment covering 104-125 (EFDRDARAIRERQLKQAEESLK) has biased composition (basic and acidic residues). The C3H1-type zinc-finger motif lies at 187-215 (DYQPDICKDYKETGYCGYGDSCKFMHDRG). An RING-type zinc finger spans residues 265–303 (CYICREPFVDPVVTKCKHYFCEHCALKHHSKNKKCFVCN).

In Oryza sativa subsp. japonica (Rice), this protein is Zinc finger CCCH domain-containing protein 15.